A 436-amino-acid chain; its full sequence is Deoxyuridine 5'-triphosphate nucleotidohydrolase (436 aa).

Substrate-binding positions include 328 to 330 (RSS) and 431 to 432 (FG).

The protein belongs to the dUTPase family. It depends on Mg(2+) as a cofactor.

It carries out the reaction dUTP + H2O = dUMP + diphosphate + H(+). In terms of biological role, involved in nucleotide metabolism: produces dUMP, the immediate precursor of thymidine nucleotides and decreases the intracellular concentration of dUTP to avoid uracil incorporation into viral DNA. The protein is Deoxyuridine 5'-triphosphate nucleotidohydrolase of Gallid herpesvirus 2 (strain Chicken/Md5/ATCC VR-987) (GaHV-2).